Reading from the N-terminus, the 425-residue chain is Dual-specificity RNA methyltransferase RlmN (425 aa).

Residue Glu136 is the Proton acceptor of the active site. Residues 142–389 (GDDRGTLCVS…VRTPRGRDIL (248 aa)) enclose the Radical SAM core domain. An intrachain disulfide couples Cys149 to Cys392. Residues Cys156, Cys160, and Cys163 each coordinate [4Fe-4S] cluster. S-adenosyl-L-methionine contacts are provided by residues 218 to 219 (GE), Ser250, 272 to 274 (SLH), and Asn349. Cys392 serves as the catalytic S-methylcysteine intermediate.

It belongs to the radical SAM superfamily. RlmN family. [4Fe-4S] cluster serves as cofactor.

The protein resides in the cytoplasm. The enzyme catalyses adenosine(2503) in 23S rRNA + 2 reduced [2Fe-2S]-[ferredoxin] + 2 S-adenosyl-L-methionine = 2-methyladenosine(2503) in 23S rRNA + 5'-deoxyadenosine + L-methionine + 2 oxidized [2Fe-2S]-[ferredoxin] + S-adenosyl-L-homocysteine. The catalysed reaction is adenosine(37) in tRNA + 2 reduced [2Fe-2S]-[ferredoxin] + 2 S-adenosyl-L-methionine = 2-methyladenosine(37) in tRNA + 5'-deoxyadenosine + L-methionine + 2 oxidized [2Fe-2S]-[ferredoxin] + S-adenosyl-L-homocysteine. Its function is as follows. Specifically methylates position 2 of adenine 2503 in 23S rRNA and position 2 of adenine 37 in tRNAs. m2A2503 modification seems to play a crucial role in the proofreading step occurring at the peptidyl transferase center and thus would serve to optimize ribosomal fidelity. This Methylorubrum populi (strain ATCC BAA-705 / NCIMB 13946 / BJ001) (Methylobacterium populi) protein is Dual-specificity RNA methyltransferase RlmN.